Reading from the N-terminus, the 153-residue chain is Carbohydrate-binding protein AWN (153 aa).

Positions 1–20 (MKLAAPSLALLLSTATLVSG) are cleaved as a signal peptide. Position 21 is an N-acetylalanine (alanine 21). 2 disulfide bridges follow: cysteine 29–cysteine 50 and cysteine 73–cysteine 94. The CUB domain occupies 29-130 (CGGVLRDPPG…SPFHIYYYAD (102 aa)). The segment at 93-130 (ICGGISLVFRSSSNIATIKYLRTSGQRASPFHIYYYAD) is heparin-binding.

The protein belongs to the spermadhesin family. In terms of processing, partial N-acetylation differentiates isoforms AWN-1 (not acetylated) and AWN-2 (acetylated).

It localises to the secreted. Functionally, AWN proteins mediate the binding of boar spermatozoa to component(s) of the egg's zona pellucida by a carbohydrate-binding mechanism. Awn proteins are secretory components of the male accessory glands being coated to the sperm surface at the time of ejaculation. They possess as well heparin-, serine-protease-inhibitor-binding capability. The chain is Carbohydrate-binding protein AWN from Sus scrofa (Pig).